The chain runs to 318 residues: Protein disulfide-isomerase MPD1 (318 aa).

An N-terminal signal peptide occupies residues 1–21; that stretch reads MLFLNIIKLLLGLFIMNEVKA. A Thioredoxin domain is found at 22-158; that stretch reads QNFYDSDPHI…SLSRIRSYVK (137 aa). An N-linked (GlcNAc...) asparagine glycan is attached at Asn-47. Cys-59 and Cys-62 are disulfide-bonded. The N-linked (GlcNAc...) asparagine glycan is linked to Asn-307. Residues 315-318 carry the Prevents secretion from ER motif; it reads HDEL.

Belongs to the protein disulfide isomerase family. Interacts with CNE1 and EPS1.

It is found in the endoplasmic reticulum lumen. It carries out the reaction Catalyzes the rearrangement of -S-S- bonds in proteins.. Participates in the folding of proteins containing disulfide bonds. This chain is Protein disulfide-isomerase MPD1 (MPD1), found in Saccharomyces cerevisiae (strain ATCC 204508 / S288c) (Baker's yeast).